The following is a 606-amino-acid chain: Elongation factor 4 (606 aa).

The 183-residue stretch at lysine 10–glutamine 192 folds into the tr-type G domain. Residues aspartate 22–threonine 27 and asparagine 139–aspartate 142 contribute to the GTP site.

The protein belongs to the TRAFAC class translation factor GTPase superfamily. Classic translation factor GTPase family. LepA subfamily.

Its subcellular location is the cell inner membrane. The enzyme catalyses GTP + H2O = GDP + phosphate + H(+). Required for accurate and efficient protein synthesis under certain stress conditions. May act as a fidelity factor of the translation reaction, by catalyzing a one-codon backward translocation of tRNAs on improperly translocated ribosomes. Back-translocation proceeds from a post-translocation (POST) complex to a pre-translocation (PRE) complex, thus giving elongation factor G a second chance to translocate the tRNAs correctly. Binds to ribosomes in a GTP-dependent manner. This is Elongation factor 4 from Nitrosococcus oceani (strain ATCC 19707 / BCRC 17464 / JCM 30415 / NCIMB 11848 / C-107).